The primary structure comprises 449 residues: Xylose isomerase (449 aa).

Residues H101 and D104 contribute to the active site. E232, E268, H271, D296, D307, D309, and D340 together coordinate Mg(2+).

It belongs to the xylose isomerase family. As to quaternary structure, homotetramer. Mg(2+) is required as a cofactor.

The protein resides in the cytoplasm. The enzyme catalyses alpha-D-xylose = alpha-D-xylulofuranose. This Bifidobacterium longum (strain DJO10A) protein is Xylose isomerase.